A 364-amino-acid chain; its full sequence is Spermidine/putrescine import ATP-binding protein PotA (364 aa).

The ABC transporter domain occupies 6-236 (IEIRQIYKSY…PANLHVAMFI (231 aa)). Residue 38–45 (GPSGCGKT) coordinates ATP.

Belongs to the ABC transporter superfamily. Spermidine/putrescine importer (TC 3.A.1.11.1) family. The complex is composed of two ATP-binding proteins (PotA), two transmembrane proteins (PotB and PotC) and a solute-binding protein (PotD).

The protein localises to the cell inner membrane. It carries out the reaction ATP + H2O + polyamine-[polyamine-binding protein]Side 1 = ADP + phosphate + polyamineSide 2 + [polyamine-binding protein]Side 1.. Part of the ABC transporter complex PotABCD involved in spermidine/putrescine import. Responsible for energy coupling to the transport system. This chain is Spermidine/putrescine import ATP-binding protein PotA, found in Legionella pneumophila subsp. pneumophila (strain Philadelphia 1 / ATCC 33152 / DSM 7513).